Reading from the N-terminus, the 558-residue chain is Dihydroxy-acid dehydratase (558 aa).

A Mg(2+)-binding site is contributed by Asp-78. Cys-119 contacts [2Fe-2S] cluster. Positions 120 and 121 each coordinate Mg(2+). Residue Lys-121 is modified to N6-carboxylysine. Cys-192 serves as a coordination point for [2Fe-2S] cluster. Glu-446 is a Mg(2+) binding site. Residue Ser-472 is the Proton acceptor of the active site.

This sequence belongs to the IlvD/Edd family. In terms of assembly, homodimer. [2Fe-2S] cluster is required as a cofactor. It depends on Mg(2+) as a cofactor.

The enzyme catalyses (2R)-2,3-dihydroxy-3-methylbutanoate = 3-methyl-2-oxobutanoate + H2O. It carries out the reaction (2R,3R)-2,3-dihydroxy-3-methylpentanoate = (S)-3-methyl-2-oxopentanoate + H2O. It functions in the pathway amino-acid biosynthesis; L-isoleucine biosynthesis; L-isoleucine from 2-oxobutanoate: step 3/4. Its pathway is amino-acid biosynthesis; L-valine biosynthesis; L-valine from pyruvate: step 3/4. Functionally, functions in the biosynthesis of branched-chain amino acids. Catalyzes the dehydration of (2R,3R)-2,3-dihydroxy-3-methylpentanoate (2,3-dihydroxy-3-methylvalerate) into 2-oxo-3-methylpentanoate (2-oxo-3-methylvalerate) and of (2R)-2,3-dihydroxy-3-methylbutanoate (2,3-dihydroxyisovalerate) into 2-oxo-3-methylbutanoate (2-oxoisovalerate), the penultimate precursor to L-isoleucine and L-valine, respectively. The chain is Dihydroxy-acid dehydratase from Campylobacter jejuni subsp. doylei (strain ATCC BAA-1458 / RM4099 / 269.97).